Here is a 117-residue protein sequence, read N- to C-terminus: MALETVPKDLRHLRACLLCSLVKTIDQFEYDGCDNCDAYLQMKGNREMVYDCTSSSFDGINAMMSPEDSWVSKWQRVSNFKPGVYAVSVTGRLPQGIVRELKSRGVAYKSRDTAIKT.

The interaction with SUPT5H stretch occupies residues 1–40 (MALETVPKDLRHLRACLLCSLVKTIDQFEYDGCDNCDAYL). The C4-type zinc finger occupies 16–36 (CLLCSLVKTIDQFEYDGCDNC).

It belongs to the SPT4 family. Interacts with SUPT5H to form DSIF. DSIF interacts with the positive transcription elongation factor b complex (P-TEFb complex), which is composed of CDK9 and cyclin-T (CCNT1 or CCNT2). DSIF interacts with RNA polymerase II, and this interaction is reduced by phosphorylation of the C-terminal domain (CTD) of POLR2A by P-TEFb. DSIF also interacts with the NELF complex, which is composed of WHSC2/NELFA, COBRA1/NELFB, TH1L/NELFD and RDBP/NELFE, and this interaction occurs following prior binding of DSIF to RNA polymerase II. DSIF also interacts with HRMT1L2/PRMT1, HTATSF1/TATSF1, RNGTT/CAP1A, SKB1/PRMT5, SUPT6H, and can interact with PIN1. In terms of processing, ubiquitinated by Ubr5 when not assembled in the DSIF complex, leading to its degradation: Ubr5 recognizes and binds a degron that is not accessible when Supt4h1b is part of the DSIF complex. As to expression, expressed in brain, heart and liver.

Its subcellular location is the nucleus. In terms of biological role, component of the DRB sensitivity-inducing factor complex (DSIF complex), which regulates mRNA processing and transcription elongation by RNA polymerase II. DSIF positively regulates mRNA capping by stimulating the mRNA guanylyltransferase activity of RNGTT/CAP1A. DSIF also acts cooperatively with the negative elongation factor complex (NELF complex) to enhance transcriptional pausing at sites proximal to the promoter. Transcriptional pausing may facilitate the assembly of an elongation competent RNA polymerase II complex. DSIF and NELF promote pausing by inhibition of the transcription elongation factor TFIIS/S-II. TFIIS/S-II binds to RNA polymerase II at transcription pause sites and stimulates the weak intrinsic nuclease activity of the enzyme. Cleavage of blocked transcripts by RNA polymerase II promotes the resumption of transcription from the new 3' terminus and may allow repeated attempts at transcription through natural pause sites. In Mus musculus (Mouse), this protein is Transcription elongation factor SPT4-B (Supt4h1b).